We begin with the raw amino-acid sequence, 184 residues long: Shikimate kinase (184 aa).

17-22 contributes to the ATP binding site; sequence SVGKTS. Threonine 21 is a binding site for Mg(2+). Substrate-binding residues include aspartate 39 and glycine 85.

This sequence belongs to the shikimate kinase family. In terms of assembly, monomer. Mg(2+) serves as cofactor.

The protein localises to the cytoplasm. It catalyses the reaction shikimate + ATP = 3-phosphoshikimate + ADP + H(+). It participates in metabolic intermediate biosynthesis; chorismate biosynthesis; chorismate from D-erythrose 4-phosphate and phosphoenolpyruvate: step 5/7. Its function is as follows. Catalyzes the specific phosphorylation of the 3-hydroxyl group of shikimic acid using ATP as a cosubstrate. The chain is Shikimate kinase from Chlamydia muridarum (strain MoPn / Nigg).